The primary structure comprises 904 residues: Thiamine diphosphate dependent-3-acetyloctanal synthase PigD (904 aa).

The interval 879 to 904 (RKAWAAQQPESTSTAFDQDPTQEATS) is disordered. The span at 886–904 (QPESTSTAFDQDPTQEATS) shows a compositional bias: polar residues.

This sequence belongs to the TPP enzyme family. Requires thiamine diphosphate as cofactor.

The enzyme catalyses (2E)-octenal + pyruvate + H(+) = (S)-3-acetyloctanal + CO2. It participates in antibiotic biosynthesis; prodigiosin biosynthesis. Functionally, involved in the biosynthesis of 2-methyl-3-n-amyl-pyrrole (MAP), one of the terminal products involved in the biosynthesis of the red antibiotic prodigiosin (Pig). Catalyzes the decarboxylation of pyruvate, followed by the modification of the resulting two-carbon fragment acetaldehyde at the C3 position of the 2-octenal (1,2-addition of acetaldehyde) giving 3-acetyloctanal. In vitro, it can act on a number of alpha,beta-unsaturated carbonyl compounds, including aldehydes and ketones, and can catalyze both 1,2-addition and Stetter-type 1,4-addition depending on the substrate. The protein is Thiamine diphosphate dependent-3-acetyloctanal synthase PigD of Serratia marcescens.